The chain runs to 229 residues: Enolase-phosphatase E1 (229 aa).

Polar residues predominate over residues 208-218; that stretch reads DTQSTHRQVSS. The disordered stretch occupies residues 208–229; it reads DTQSTHRQVSSFDDIHPEQIPT. The span at 220 to 229 shows a compositional bias: basic and acidic residues; it reads DDIHPEQIPT.

It belongs to the HAD-like hydrolase superfamily. MasA/MtnC family. As to quaternary structure, monomer. Requires Mg(2+) as cofactor.

It catalyses the reaction 5-methylsulfanyl-2,3-dioxopentyl phosphate + H2O = 1,2-dihydroxy-5-(methylsulfanyl)pent-1-en-3-one + phosphate. It functions in the pathway amino-acid biosynthesis; L-methionine biosynthesis via salvage pathway; L-methionine from S-methyl-5-thio-alpha-D-ribose 1-phosphate: step 3/6. Its pathway is amino-acid biosynthesis; L-methionine biosynthesis via salvage pathway; L-methionine from S-methyl-5-thio-alpha-D-ribose 1-phosphate: step 4/6. Functionally, bifunctional enzyme that catalyzes the enolization of 2,3-diketo-5-methylthiopentyl-1-phosphate (DK-MTP-1-P) into the intermediate 2-hydroxy-3-keto-5-methylthiopentenyl-1-phosphate (HK-MTPenyl-1-P), which is then dephosphorylated to form the acireductone 1,2-dihydroxy-3-keto-5-methylthiopentene (DHK-MTPene). This chain is Enolase-phosphatase E1, found in Cronobacter sakazakii (Enterobacter sakazakii).